Consider the following 309-residue polypeptide: 11-beta-hydroxysteroid dehydrogenase-like 3 (309 aa).

Residues 10–30 traverse the membrane as a helical; Signal-anchor for type II membrane protein segment; sequence LLLPPLTIIFLFLFYPFYLLI. NADP(+)-binding positions include 54-80 and Asp-105; that span reads GASS…VARR. Substrate is bound at residue Ser-184. Tyr-197 acts as the Proton acceptor in catalysis. NADP(+)-binding positions include 197-201 and Lys-201; that span reads YAASK.

The protein belongs to the short-chain dehydrogenases/reductases (SDR) family.

The protein resides in the membrane. The sequence is that of 11-beta-hydroxysteroid dehydrogenase-like 3 (HSD3) from Arabidopsis thaliana (Mouse-ear cress).